The following is a 345-amino-acid chain: Isopentenyl-diphosphate delta-isomerase (345 aa).

14–15 contributes to the substrate binding site; sequence RK. Residues Ser71, 72–74, Ser102, and Asn130 contribute to the FMN site; that span reads SMT. A substrate-binding site is contributed by 102–104; it reads SMR. Gln165 provides a ligand contact to substrate. Glu166 contacts Mg(2+). FMN contacts are provided by residues Lys197, Thr227, 277–279, and 298–299; these read GLK and AG.

Belongs to the IPP isomerase type 2 family. As to quaternary structure, homooctamer. Dimer of tetramers. Requires FMN as cofactor. NADPH serves as cofactor. The cofactor is Mg(2+).

It localises to the cytoplasm. The catalysed reaction is isopentenyl diphosphate = dimethylallyl diphosphate. Functionally, involved in the biosynthesis of isoprenoids. Catalyzes the 1,3-allylic rearrangement of the homoallylic substrate isopentenyl (IPP) to its allylic isomer, dimethylallyl diphosphate (DMAPP). This Rickettsia felis (strain ATCC VR-1525 / URRWXCal2) (Rickettsia azadi) protein is Isopentenyl-diphosphate delta-isomerase.